Here is a 481-residue protein sequence, read N- to C-terminus: Aspartyl/glutamyl-tRNA(Asn/Gln) amidotransferase subunit B (481 aa).

It belongs to the GatB/GatE family. GatB subfamily. In terms of assembly, heterotrimer of A, B and C subunits.

The catalysed reaction is L-glutamyl-tRNA(Gln) + L-glutamine + ATP + H2O = L-glutaminyl-tRNA(Gln) + L-glutamate + ADP + phosphate + H(+). It catalyses the reaction L-aspartyl-tRNA(Asn) + L-glutamine + ATP + H2O = L-asparaginyl-tRNA(Asn) + L-glutamate + ADP + phosphate + 2 H(+). In terms of biological role, allows the formation of correctly charged Asn-tRNA(Asn) or Gln-tRNA(Gln) through the transamidation of misacylated Asp-tRNA(Asn) or Glu-tRNA(Gln) in organisms which lack either or both of asparaginyl-tRNA or glutaminyl-tRNA synthetases. The reaction takes place in the presence of glutamine and ATP through an activated phospho-Asp-tRNA(Asn) or phospho-Glu-tRNA(Gln). In Pseudomonas putida (strain W619), this protein is Aspartyl/glutamyl-tRNA(Asn/Gln) amidotransferase subunit B.